Consider the following 362-residue polypeptide: Chorismate synthase (362 aa).

R47 contacts NADP(+). FMN contacts are provided by residues 124-126 (RSS), G286, 301-305 (KPTAT), and R327.

Belongs to the chorismate synthase family. As to quaternary structure, homotetramer. Requires FMNH2 as cofactor.

It catalyses the reaction 5-O-(1-carboxyvinyl)-3-phosphoshikimate = chorismate + phosphate. The protein operates within metabolic intermediate biosynthesis; chorismate biosynthesis; chorismate from D-erythrose 4-phosphate and phosphoenolpyruvate: step 7/7. Its function is as follows. Catalyzes the anti-1,4-elimination of the C-3 phosphate and the C-6 proR hydrogen from 5-enolpyruvylshikimate-3-phosphate (EPSP) to yield chorismate, which is the branch point compound that serves as the starting substrate for the three terminal pathways of aromatic amino acid biosynthesis. This reaction introduces a second double bond into the aromatic ring system. In Synechococcus elongatus (strain ATCC 33912 / PCC 7942 / FACHB-805) (Anacystis nidulans R2), this protein is Chorismate synthase.